The primary structure comprises 140 residues: Nucleoside diphosphate kinase (140 aa).

ATP-binding residues include Lys-11, Phe-59, Arg-87, Thr-93, Arg-104, and Asn-114. The active-site Pros-phosphohistidine intermediate is His-117.

Belongs to the NDK family. In terms of assembly, homotetramer. The cofactor is Mg(2+).

The protein localises to the cytoplasm. It catalyses the reaction a 2'-deoxyribonucleoside 5'-diphosphate + ATP = a 2'-deoxyribonucleoside 5'-triphosphate + ADP. It carries out the reaction a ribonucleoside 5'-diphosphate + ATP = a ribonucleoside 5'-triphosphate + ADP. Its function is as follows. Major role in the synthesis of nucleoside triphosphates other than ATP. The ATP gamma phosphate is transferred to the NDP beta phosphate via a ping-pong mechanism, using a phosphorylated active-site intermediate. This Methylorubrum extorquens (strain CM4 / NCIMB 13688) (Methylobacterium extorquens) protein is Nucleoside diphosphate kinase.